The chain runs to 68 residues: Glu S.griseus protease inhibitor (68 aa).

Position 1 is an N-acetylserine (Ser-1). A disulfide bridge links Cys-3 with Cys-48.

Belongs to the protease inhibitor I13 (potato type I serine protease inhibitor) family.

Its function is as follows. Competitively inhibits Glu S.griseus protease by forming probably a 1:1 complex. BGIA has no inhibitory activity against 2 other acidic amino acid-specific endopeptidases (S.aureus protease V8 and B.subtilis proteinase), chymotrypsin, trypsin, pancreatic elastase, and papain, although subtilisin Carlsberg was strongly inhibited. This is Glu S.griseus protease inhibitor from Momordica charantia (Bitter gourd).